The following is a 97-amino-acid chain: Large ribosomal subunit protein bL28 (97 aa).

Belongs to the bacterial ribosomal protein bL28 family.

The sequence is that of Large ribosomal subunit protein bL28 from Brucella abortus (strain S19).